The sequence spans 331 residues: MGRLILEHTLQGHKGRIWGVAWHPKGNSFASCGEDKAIRIWSQSGNTWTTKTILSDGHKRTIREVRWSPCGEYLASASFDATTAIWSKHECNATLEGHENEVKSVSWSQSGGLLATCSRDKSVWIWEVAGDDEFECAAVLNAHTQDVKRVVWHPSKEILASASYDNTIKMYAESALDSDWDCTATLSSHTSTVWSIDFEADGERLVSCSDDTTLKIWRAYHPGNEAGIATPDKTTVWKCVCTVAGQHSRAVYDVSWCKLTGLIASACGDDGIRIFKESSDSKRDEPTFELLTAEESAHEQDVNAVEWNPVTAGQLISCSDDGTIKIWKLQE.

WD repeat units lie at residues 12-51 (GHKGRIWGVAWHPKGNSFASCGEDKAIRIWSQSGNTWTTK), 57-96 (GHKRTIREVRWSPCGEYLASASFDATTAIWSKHECNATLE), 97-136 (GHENEVKSVSWSQSGGLLATCSRDKSVWIWEVAGDDEFEC), 142-181 (AHTQDVKRVVWHPSKEILASASYDNTIKMYAESALDSDWD), 188-227 (SHTSTVWSIDFEADGERLVSCSDDTTLKIWRAYHPGNEAG), 246-285 (QHSRAVYDVSWCKLTGLIASACGDDGIRIFKESSDSKRDE), and 297-331 (AHEQDVNAVEWNPVTAGQLISCSDDGTIKIWKLQE).

This sequence belongs to the WD repeat CIA1 family.

In terms of biological role, essential component of the cytosolic iron-sulfur (Fe/S) protein assembly machinery. Required for the maturation of extramitochondrial Fe/S proteins. This Drosophila grimshawi (Hawaiian fruit fly) protein is Probable cytosolic iron-sulfur protein assembly protein Ciao1.